The following is a 304-amino-acid chain: Nod factor export ATP-binding protein I (304 aa).

The ABC transporter domain occupies 6-236 (IEFDKVKKSY…EIGCDVIEIF (231 aa)). 38–45 (GPNGAGKT) is an ATP binding site.

It belongs to the ABC transporter superfamily. Lipooligosaccharide exporter (TC 3.A.1.102) family. As to quaternary structure, the complex is composed of two ATP-binding proteins (NodI) and two transmembrane proteins (NodJ).

The protein localises to the cell inner membrane. Functionally, part of the ABC transporter complex NodIJ involved in the export of the nodulation factors (Nod factors), the bacterial signal molecules that induce symbiosis and subsequent nodulation induction. Nod factors are LCO (lipo-chitin oligosaccharide), a modified beta-1,4-linked N-acetylglucosamine oligosaccharide. This subunit is responsible for energy coupling to the transport system. This chain is Nod factor export ATP-binding protein I, found in Paraburkholderia xenovorans (strain LB400).